The following is a 338-amino-acid chain: Aspartate carbamoyltransferase catalytic subunit (338 aa).

2 residues coordinate carbamoyl phosphate: Arg72 and Thr73. Lys100 is an L-aspartate binding site. Arg122, His152, and Gln155 together coordinate carbamoyl phosphate. Positions 186 and 243 each coordinate L-aspartate. 2 residues coordinate carbamoyl phosphate: Gly284 and Pro285.

This sequence belongs to the aspartate/ornithine carbamoyltransferase superfamily. ATCase family. As to quaternary structure, heterododecamer (2C3:3R2) of six catalytic PyrB chains organized as two trimers (C3), and six regulatory PyrI chains organized as three dimers (R2).

The enzyme catalyses carbamoyl phosphate + L-aspartate = N-carbamoyl-L-aspartate + phosphate + H(+). Its pathway is pyrimidine metabolism; UMP biosynthesis via de novo pathway; (S)-dihydroorotate from bicarbonate: step 2/3. Catalyzes the condensation of carbamoyl phosphate and aspartate to form carbamoyl aspartate and inorganic phosphate, the committed step in the de novo pyrimidine nucleotide biosynthesis pathway. The sequence is that of Aspartate carbamoyltransferase catalytic subunit from Acinetobacter baumannii (strain AB307-0294).